Reading from the N-terminus, the 194-residue chain is Small ribosomal subunit protein uS4c (194 aa).

Residues 82–143 (MRLDNILFRL…KQRSKALIQN (62 aa)) enclose the S4 RNA-binding domain.

It belongs to the universal ribosomal protein uS4 family. Part of the 30S ribosomal subunit. Contacts protein S5. The interaction surface between S4 and S5 is involved in control of translational fidelity.

It localises to the plastid. It is found in the chloroplast. One of the primary rRNA binding proteins, it binds directly to 16S rRNA where it nucleates assembly of the body of the 30S subunit. In terms of biological role, with S5 and S12 plays an important role in translational accuracy. The polypeptide is Small ribosomal subunit protein uS4c (rps4) (Sisyrinchium striatum (Satin flower)).